Reading from the N-terminus, the 476-residue chain is ATP synthase subunit beta (476 aa).

Position 154 to 161 (154 to 161) interacts with ATP; the sequence is GGAGVGKT.

It belongs to the ATPase alpha/beta chains family. F-type ATPases have 2 components, CF(1) - the catalytic core - and CF(0) - the membrane proton channel. CF(1) has five subunits: alpha(3), beta(3), gamma(1), delta(1), epsilon(1). CF(0) has three main subunits: a(1), b(2) and c(9-12). The alpha and beta chains form an alternating ring which encloses part of the gamma chain. CF(1) is attached to CF(0) by a central stalk formed by the gamma and epsilon chains, while a peripheral stalk is formed by the delta and b chains.

It is found in the cell inner membrane. The enzyme catalyses ATP + H2O + 4 H(+)(in) = ADP + phosphate + 5 H(+)(out). Functionally, produces ATP from ADP in the presence of a proton gradient across the membrane. The catalytic sites are hosted primarily by the beta subunits. The protein is ATP synthase subunit beta of Nitrobacter winogradskyi (strain ATCC 25391 / DSM 10237 / CIP 104748 / NCIMB 11846 / Nb-255).